We begin with the raw amino-acid sequence, 401 residues long: Argininosuccinate synthase (401 aa).

ATP is bound by residues 10 to 18 and Ala38; that span reads AYSGGVDTS. Residue Tyr89 participates in L-citrulline binding. Gly119 serves as a coordination point for ATP. The L-aspartate site is built by Thr121, Asn125, and Asp126. Residue Asn125 coordinates L-citrulline. L-citrulline-binding residues include Arg129, Ser177, Ser186, Glu262, and Tyr274.

Belongs to the argininosuccinate synthase family. Type 1 subfamily. As to quaternary structure, homotetramer.

The protein resides in the cytoplasm. It carries out the reaction L-citrulline + L-aspartate + ATP = 2-(N(omega)-L-arginino)succinate + AMP + diphosphate + H(+). It functions in the pathway amino-acid biosynthesis; L-arginine biosynthesis; L-arginine from L-ornithine and carbamoyl phosphate: step 2/3. This Microcystis aeruginosa (strain NIES-843 / IAM M-2473) protein is Argininosuccinate synthase.